The chain runs to 530 residues: T-complex protein 1 subunit zeta (530 aa).

Glycine 38 serves as a coordination point for ADP. Glycine 38 lines the ATP pocket. A Mg(2+)-binding site is contributed by aspartate 89. ADP contacts are provided by glycine 90, threonine 91, threonine 92, serine 93, threonine 157, lysine 158, and alanine 410. Glycine 90, threonine 91, and threonine 92 together coordinate ATP. Alanine 410, glycine 411, aspartate 495, and lysine 500 together coordinate ATP. Residue aspartate 495 participates in ADP binding.

In terms of assembly, component of the chaperonin-containing T-complex (TRiC), a hexadecamer composed of two identical back-to-back stacked rings enclosing a protein folding chamber. Each ring is made up of eight different subunits: TCP1/CCT1, CCT2, CCT3, CCT4, CCT5, CCT6A/CCT6, CCT7, CCT8. Interacts with PACRG.

The protein resides in the cytoplasm. It carries out the reaction ATP + H2O = ADP + phosphate + H(+). In terms of biological role, component of the chaperonin-containing T-complex (TRiC), a molecular chaperone complex that assists the folding of actin, tubulin and other proteins upon ATP hydrolysis. This Gallus gallus (Chicken) protein is T-complex protein 1 subunit zeta.